The following is a 743-amino-acid chain: MASLTLPALALALSNPGAVRLRAAAFRCWALRRRGWAAAGALASPNSVLSEHAFKRLQLGSDDEDGEGPYGSDADEGFEAGEGDNEELAIARLGLPDELVATLEKRGITHLFPIQRAVLIPALEGRDLIARAKTGTGKTLAFGIPMIKQLIEQDDGRITRRGRTPRVLVLAPTRELAKQVEKEIKESAPKLGTVCVYGGVSYNVQQNALSRGVDVVVGTPGRIIDLINGGSLQLGEVQYLVLDEADQMLAVGFEEDVETILQQLPAGRQSMLFSATMPSWVKKLSRRYLNNPLTIDLVGDQDEKLAEGIKLYAIPLTTTSKRTVLSDLITVYAKGGKTIVFTRTKKDADEVSLALTNSIASEALHGDISQHQRERTLNGFRQGKFTVLVATDVAARGLDIPNVDLIIHYELPNDPETFVHRSGRTGRAGKAGTAILMFTSSQKRTVKSLERDVGCNFEFISPPSIEEVLESSAEHVIATLRGVHPESTKYFLGAAEKLTEELGPHALASALAHLSGFSQPPSSRSLISHEQGWVTLQLTREQGFGRGFFSPRSVTGFLSDVCSAAADEVGKIYLTADENVQGAVFDLPEEIAKDLLTMELPPGNTLTKISKLPALQDDGPATDSYGRFSNDRGSRNNRRSRGGGASRGRGGWDTDGEDRFRRGGRSLRSDNDSWSDDDWSGGGRKSNRSSSFGSRSSSYSSRGSPSFGGRSSSFGGRESNRSFSGACFNCGESGHRATDCPNK.

Residues 1 to 37 (MASLTLPALALALSNPGAVRLRAAAFRCWALRRRGWA) constitute a chloroplast transit peptide. The tract at residues 60–79 (GSDDEDGEGPYGSDADEGFE) is disordered. Acidic residues predominate over residues 61–79 (SDDEDGEGPYGSDADEGFE). The Q motif signature appears at 88 to 116 (LAIARLGLPDELVATLEKRGITHLFPIQR). The region spanning 119–295 (LIPALEGRDL…RRYLNNPLTI (177 aa)) is the Helicase ATP-binding domain. 132–139 (AKTGTGKT) serves as a coordination point for ATP. The DEAD box signature appears at 243 to 246 (DEAD). The 146-residue stretch at 324-469 (VLSDLITVYA…ISPPSIEEVL (146 aa)) folds into the Helicase C-terminal domain. Residues 606–719 (LTKISKLPAL…RSSSFGGRES (114 aa)) form a disordered region. Residues 642–653 (GGGASRGRGGWD) show a composition bias toward gly residues. The segment covering 657–671 (EDRFRRGGRSLRSDN) has biased composition (basic and acidic residues). A compositionally biased stretch (low complexity) spans 688–719 (RSSSFGSRSSSYSSRGSPSFGGRSSSFGGRES). A CCHC-type zinc finger spans residues 725-742 (GACFNCGESGHRATDCPN).

Belongs to the DEAD box helicase family. DDX21/DDX50 subfamily.

It localises to the plastid. The protein localises to the chloroplast stroma. The enzyme catalyses ATP + H2O = ADP + phosphate + H(+). In terms of biological role, nuclear genome-encoded factor involved in ribosome biogenesis in chloroplasts. Binds specific group II introns in chloroplasts and facilitates their splicing. Is required for rRNA maturation in plastids and may contribute to the assembly of the large (50S) ribosomal subunit. Required for normal development of chloroplasts. This chain is DEAD-box ATP-dependent RNA helicase 3B, chloroplastic, found in Zea mays (Maize).